The chain runs to 550 residues: Chaperonin GroEL (550 aa).

ATP is bound by residues 30–33 (TLGP), Lys-51, 87–91 (DGTTT), Gly-415, 480–482 (NAA), and Asp-496.

Belongs to the chaperonin (HSP60) family. Forms a cylinder of 14 subunits composed of two heptameric rings stacked back-to-back. Interacts with the co-chaperonin GroES.

It is found in the cytoplasm. The catalysed reaction is ATP + H2O + a folded polypeptide = ADP + phosphate + an unfolded polypeptide.. Its function is as follows. Together with its co-chaperonin GroES, plays an essential role in assisting protein folding. The GroEL-GroES system forms a nano-cage that allows encapsulation of the non-native substrate proteins and provides a physical environment optimized to promote and accelerate protein folding. This chain is Chaperonin GroEL, found in Variovorax paradoxus (strain S110).